Consider the following 531-residue polypeptide: T-complex protein 1 subunit zeta-2 (531 aa).

It belongs to the TCP-1 chaperonin family. As to quaternary structure, component of the chaperonin-containing T-complex (TRiC), a heterooligomeric complex of about 850 to 900 kDa that forms two stacked rings, 12 to 16 nm in diameter. Testis specific.

It localises to the cytoplasm. Component of the chaperonin-containing T-complex (TRiC), a molecular chaperone complex that assists the folding of proteins upon ATP hydrolysis. The protein is T-complex protein 1 subunit zeta-2 (Cct6b) of Mus musculus (Mouse).